The following is a 430-amino-acid chain: Adenylosuccinate synthetase (430 aa).

Residues 13–19 (GDEGKGK) and 41–43 (GHT) contribute to the GTP site. Catalysis depends on D14, which acts as the Proton acceptor. Residues D14 and G41 each coordinate Mg(2+). Residues 14 to 17 (DEGK), 39 to 42 (NAGH), T130, R144, Q225, T240, and R304 contribute to the IMP site. Residue H42 is the Proton donor of the active site. 300-306 (STTGRAR) is a substrate binding site. GTP-binding positions include R306, 332–334 (KLD), and 414–416 (STG).

The protein belongs to the adenylosuccinate synthetase family. Homodimer. Requires Mg(2+) as cofactor.

The protein resides in the cytoplasm. The catalysed reaction is IMP + L-aspartate + GTP = N(6)-(1,2-dicarboxyethyl)-AMP + GDP + phosphate + 2 H(+). Its pathway is purine metabolism; AMP biosynthesis via de novo pathway; AMP from IMP: step 1/2. Its function is as follows. Plays an important role in the de novo pathway of purine nucleotide biosynthesis. Catalyzes the first committed step in the biosynthesis of AMP from IMP. The polypeptide is Adenylosuccinate synthetase (Pseudomonas putida (strain ATCC 700007 / DSM 6899 / JCM 31910 / BCRC 17059 / LMG 24140 / F1)).